Here is a 141-residue protein sequence, read N- to C-terminus: Hemoglobin subunit alpha-1 (141 aa).

Residues 1–141 (VLSPADKNNV…VSTVLTSKYR (141 aa)) form the Globin domain. Histidine 58 is a binding site for O2. Position 87 (histidine 87) interacts with heme b.

The protein belongs to the globin family. In terms of assembly, heterotetramer of two alpha chains and two beta chains. Red blood cells.

Functionally, involved in oxygen transport from the lung to the various peripheral tissues. This Varecia variegata (Black-and-white ruffed lemur) protein is Hemoglobin subunit alpha-1.